The primary structure comprises 96 residues: Small ribosomal subunit protein bS18 (96 aa).

Residues 1–20 (MSHGGKRRSGDGGSEGSSYS) form a disordered region.

The protein belongs to the bacterial ribosomal protein bS18 family. As to quaternary structure, part of the 30S ribosomal subunit. Forms a tight heterodimer with protein bS6.

In terms of biological role, binds as a heterodimer with protein bS6 to the central domain of the 16S rRNA, where it helps stabilize the platform of the 30S subunit. This is Small ribosomal subunit protein bS18 from Anaplasma phagocytophilum (strain HZ).